The sequence spans 122 residues: Ribosome-binding factor A (122 aa).

Belongs to the RbfA family. As to quaternary structure, monomer. Binds 30S ribosomal subunits, but not 50S ribosomal subunits or 70S ribosomes.

Its subcellular location is the cytoplasm. One of several proteins that assist in the late maturation steps of the functional core of the 30S ribosomal subunit. Associates with free 30S ribosomal subunits (but not with 30S subunits that are part of 70S ribosomes or polysomes). Required for efficient processing of 16S rRNA. May interact with the 5'-terminal helix region of 16S rRNA. This chain is Ribosome-binding factor A, found in Anaeromyxobacter sp. (strain Fw109-5).